We begin with the raw amino-acid sequence, 290 residues long: 4-diphosphocytidyl-2-C-methyl-D-erythritol kinase (290 aa).

Residue Lys10 is part of the active site. Residue 95–105 coordinates ATP; sequence PVAAGLAGGSS. Asp137 is a catalytic residue.

This sequence belongs to the GHMP kinase family. IspE subfamily.

The catalysed reaction is 4-CDP-2-C-methyl-D-erythritol + ATP = 4-CDP-2-C-methyl-D-erythritol 2-phosphate + ADP + H(+). The protein operates within isoprenoid biosynthesis; isopentenyl diphosphate biosynthesis via DXP pathway; isopentenyl diphosphate from 1-deoxy-D-xylulose 5-phosphate: step 3/6. Functionally, catalyzes the phosphorylation of the position 2 hydroxy group of 4-diphosphocytidyl-2C-methyl-D-erythritol. This chain is 4-diphosphocytidyl-2-C-methyl-D-erythritol kinase, found in Geobacillus kaustophilus (strain HTA426).